A 489-amino-acid chain; its full sequence is Zinc finger protein 58 (489 aa).

A KRAB domain is found at 2–73 (LSFWDVAIDF…KRQAAAAVHP (72 aa)). The C2H2-type 1; degenerate zinc-finger motif lies at 78–100 (NKCKDFSKAFFCKSLLTQHQRIR). 14 C2H2-type zinc fingers span residues 106 to 128 (FKCEECGKAFNNRSNLSEHKRIH), 134 to 156 (YKCEECGKAFRIRSKLSTHQRVH), 162 to 184 (YKCEECGKAFNSHSNLSEHKRIH), 190 to 212 (YKCEECGKAFSTRSTYYRHQKNH), 218 to 240 (YKCEECAKEFSYPSLLKVHQRIH), 246 to 268 (YKCEECGKPFYCPLLLKKHQIIH), 274 to 296 (YKCAECGKAFHYPSLLKRHQRIH), 302 to 324 (CKCKDCDRAFYSSAFLKRHQRIH), 330 to 352 (YKCGECGKRFCSFPHLQYHQRFH), 358 to 380 (YKCEQCGKTFSTLSYLPWHKLRH), 386 to 408 (YKCEKCGKMFYSTLDLKKHQKIH), 410 to 432 (YKCGECHYGFPNYAALTAHQRVH), 438 to 460 (HVCEQCGKDFSRIDSLNQHQLVH), and 466 to 488 (YKCEKCGKCFYRSSSLKRHQGIH).

It belongs to the krueppel C2H2-type zinc-finger protein family. Expressed in liver, testis and, at considerably lower levels, in brain, spleen and heart.

It localises to the nucleus. Functionally, may have a role during differentiation processes. The chain is Zinc finger protein 58 (Zfp58) from Mus musculus (Mouse).